The sequence spans 99 residues: Transcription and mRNA export factor SUS1 (99 aa).

This sequence belongs to the ENY2 family. In terms of assembly, component of the nuclear pore complex (NPC)-associated TREX-2 complex (transcription and export complex 2), composed of at least SUS1, SAC3, THP1, SEM1, and CDC31. TREX-2 contains 2 SUS1 chains. The TREX-2 complex interacts with the nucleoporin NUP1. Component of the 1.8 MDa SAGA transcription coactivator-HAT complex. SAGA is built of 5 distinct domains with specialized functions. Within the SAGA complex, SUS1, SGF11, SGF73 and UBP8 form an additional subcomplex of SAGA called the DUB module (deubiquitination module). Interacts directly with THP1, SAC3, SGF11, and with the RNA polymerase II.

The protein localises to the nucleus. It is found in the nucleoplasm. The protein resides in the cytoplasm. It localises to the P-body. Involved in mRNA export coupled transcription activation by association with both the TREX-2 and the SAGA complexes. At the promoters, SAGA is required for recruitment of the basal transcription machinery. It influences RNA polymerase II transcriptional activity through different activities such as TBP interaction and promoter selectivity, interaction with transcription activators, and chromatin modification through histone acetylation and deubiquitination. Within the SAGA complex, participates in a subcomplex required for deubiquitination of H2B and for the maintenance of steady-state H3 methylation levels. The TREX-2 complex functions in docking export-competent ribonucleoprotein particles (mRNPs) to the nuclear entrance of the nuclear pore complex (nuclear basket). TREX-2 participates in mRNA export and accurate chromatin positioning in the nucleus by tethering genes to the nuclear periphery. May also be involved in cytoplasmic mRNA decay by interaction with components of P-bodies. This is Transcription and mRNA export factor SUS1 from Eremothecium gossypii (strain ATCC 10895 / CBS 109.51 / FGSC 9923 / NRRL Y-1056) (Yeast).